Consider the following 452-residue polypeptide: Transcription factor PERIANTHIA (452 aa).

The region spanning Asp164–Leu227 is the bZIP domain. A basic motif region spans residues Arg166–Lys186. The leucine-zipper stretch occupies residues Leu192–Leu206. Positions Val233–Arg449 constitute a DOG1 domain.

It belongs to the bZIP family. Interacts with GRXC7/ROXY1. Interacts with BOP1 and BOP2.

It localises to the nucleus. In terms of biological role, transcriptional activator involved in the determination of floral organ number. Acts to determine floral organ patterning by establishing floral organ primordia in specific numbers and positions. Plays a role in regulating stem cell fate by directly controlling AG expression. Binds to the 5'-AAGAAT-3' cis-acting element found in AG promoter. Might represent a target for a post-translational modification by GRXC7/ROXY1. The chain is Transcription factor PERIANTHIA (PAN) from Arabidopsis thaliana (Mouse-ear cress).